We begin with the raw amino-acid sequence, 163 residues long: MVKMLTMDKILSKKIKVNWLGGVFWLLPNLLDLFSASKRKASVRPYQSLLELVQENFLNRYDLVHFSFNGDHDFFHFNDLQAIRSFNFTIEEEQLGAMQPDEVLLFEPVDRVTVELDQKGLSLIHSGKAFCASANYFKHWLKRVPQQDKVTLVWRKSGFELKQ.

This is an uncharacterized protein from Mycoplasma pneumoniae (strain ATCC 29342 / M129 / Subtype 1) (Mycoplasmoides pneumoniae).